The sequence spans 169 residues: Large ribosomal subunit protein bL17 (169 aa).

The tract at residues 124–169 (EKAVKRQDRSRRVKGSKKAIDEKTSDDSASVEAAPAAPEAEEKKDA) is disordered. Basic residues predominate over residues 131 to 140 (DRSRRVKGSK). The span at 150–161 (DSASVEAAPAAP) shows a compositional bias: low complexity.

Belongs to the bacterial ribosomal protein bL17 family. As to quaternary structure, part of the 50S ribosomal subunit. Contacts protein L32.

This chain is Large ribosomal subunit protein bL17, found in Chloroherpeton thalassium (strain ATCC 35110 / GB-78).